Consider the following 247-residue polypeptide: T-cell surface glycoprotein CD8 alpha chain (247 aa).

Positions 1–27 (MASPLTRFLSLNLLLLGESIILGSGEA) are cleaved as a signal peptide. In terms of domain architecture, Ig-like V-type spans 28–139 (KPQAPELRIF…SVISNSVMYF (112 aa)). Residues 28 to 196 (KPQAPELRIF…TGLDFACDIY (169 aa)) lie on the Extracellular side of the membrane. C53 and C129 are oxidised to a cystine. N-linked (GlcNAc...) asparagine glycans are attached at residues N69, N97, and N150. Positions 156 to 182 (PVLRTPSPVHPTGTSQPQRPEDCRPRG) are disordered. The chain crosses the membrane as a helical span at residues 197 to 217 (IWAPLAGICVALLLSLIITLI). Over 218-247 (CYHRSRKRVCKCPRPLVRQEGKPRPSEKIV) the chain is Cytoplasmic.

Forms disulfide-linked heterodimers with CD8B at the cell surface. Also forms homodimers in several cell types including NK-cells or peripheral blood T-lymphocytes. Interacts with the MHC class I HLA-A/B2M dimer. Interacts with LCK in a zinc-dependent manner. In terms of processing, palmitoylated, but association with CD8B seems to be more important for the enrichment of CdD8A in lipid rafts. Phosphorylated in cytotoxic T-lymphocytes (CTLs) following activation.

It is found in the cell membrane. Its function is as follows. Integral membrane glycoprotein that plays an essential role in the immune response and serves multiple functions in responses against both external and internal offenses. In T-cells, functions primarily as a coreceptor for MHC class I molecule:peptide complex. The antigens presented by class I peptides are derived from cytosolic proteins while class II derived from extracellular proteins. Interacts simultaneously with the T-cell receptor (TCR) and the MHC class I proteins presented by antigen presenting cells (APCs). In turn, recruits the Src kinase LCK to the vicinity of the TCR-CD3 complex. LCK then initiates different intracellular signaling pathways by phosphorylating various substrates ultimately leading to lymphokine production, motility, adhesion and activation of cytotoxic T-lymphocytes (CTLs). This mechanism enables CTLs to recognize and eliminate infected cells and tumor cells. In NK-cells, the presence of CD8A homodimers at the cell surface provides a survival mechanism allowing conjugation and lysis of multiple target cells. CD8A homodimer molecules also promote the survival and differentiation of activated lymphocytes into memory CD8 T-cells. The chain is T-cell surface glycoprotein CD8 alpha chain (Cd8a) from Mus musculus (Mouse).